The sequence spans 588 residues: Pectinesterase 4 (588 aa).

Positions 1–24 (MIGKVVVSVASILLIVGVAIGVVA) are cleaved as a signal peptide. Residues Asn-86, Asn-206, and Asn-342 are each glycosylated (N-linked (GlcNAc...) asparagine). Thr-353 and Gln-383 together coordinate substrate. Asp-406 serves as the catalytic Proton donor. Asp-427 (nucleophile) is an active-site residue. 2 residues coordinate substrate: Arg-496 and Trp-498.

In the N-terminal section; belongs to the PMEI family. This sequence in the C-terminal section; belongs to the pectinesterase family. As to expression, expressed in pollen grains and pollen tubes.

The protein localises to the secreted. The protein resides in the cell wall. It catalyses the reaction [(1-&gt;4)-alpha-D-galacturonosyl methyl ester](n) + n H2O = [(1-&gt;4)-alpha-D-galacturonosyl](n) + n methanol + n H(+). Its pathway is glycan metabolism; pectin degradation; 2-dehydro-3-deoxy-D-gluconate from pectin: step 1/5. Its function is as follows. Acts in the modification of cell walls via demethylesterification of cell wall pectin. Plays an important role in growth of pollen tubes in female floral tissues, possibly via enhancing the interaction between the pollen tube and female floral tissues by modification of the cell walls. The sequence is that of Pectinesterase 4 (PME4) from Arabidopsis thaliana (Mouse-ear cress).